The sequence spans 558 residues: Potassium-transporting ATPase potassium-binding subunit (558 aa).

Helical transmembrane passes span 1-21 (MEII…SGYL), 66-86 (FNGF…WLFL), 127-147 (MIVM…VCIA), 166-186 (IVRF…ILLM), 245-265 (IWSN…MLFL), 281-301 (ALIL…LTMW), 327-347 (FGAG…TGSV), 354-374 (LTPI…VFGG), 377-397 (VGLM…SLMV), 416-436 (IVLV…LAFM), 482-502 (ISTG…QLMI), and 531-551 (IVFI…LGPI).

The protein belongs to the KdpA family. The system is composed of three essential subunits: KdpA, KdpB and KdpC.

The protein localises to the cell membrane. Functionally, part of the high-affinity ATP-driven potassium transport (or Kdp) system, which catalyzes the hydrolysis of ATP coupled with the electrogenic transport of potassium into the cytoplasm. This subunit binds the extracellular potassium ions and delivers the ions to the membrane domain of KdpB through an intramembrane tunnel. The polypeptide is Potassium-transporting ATPase potassium-binding subunit (Staphylococcus aureus (strain USA300)).